The chain runs to 274 residues: Elongation factor Ts (274 aa).

An involved in Mg(2+) ion dislocation from EF-Tu region spans residues 79–82 (TDFV).

Belongs to the EF-Ts family.

The protein localises to the cytoplasm. Functionally, associates with the EF-Tu.GDP complex and induces the exchange of GDP to GTP. It remains bound to the aminoacyl-tRNA.EF-Tu.GTP complex up to the GTP hydrolysis stage on the ribosome. The sequence is that of Elongation factor Ts from Porphyromonas gingivalis (strain ATCC 33277 / DSM 20709 / CIP 103683 / JCM 12257 / NCTC 11834 / 2561).